The sequence spans 321 residues: Protein stand still (321 aa).

Coiled coils occupy residues 74–103 (KLHE…RKKA) and 147–167 (KQEQ…KANL). Basic and acidic residues predominate over residues 146–162 (HKQEQEGATRKLEDSTS). Disordered regions lie at residues 146 to 166 (HKQE…DKAN) and 227 to 248 (QVPP…MEDV). Low complexity predominate over residues 235–244 (SKSSGSLASS). Residues 272-292 (QRDVLQRLERSMAQISQELHC) adopt a coiled-coil conformation.

As to expression, germ cells specific. Expressed in all germ cells. During the first instar larvae, it is expressed in all germ cells of both sexes. In third instar larvae, it decreases in male germ cells while it remains in female germ cells. In adult ovary, it is expressed in cells of the germarium, including the stem cells. In the early previtellogenic stages, it is highly expressed in the nurse cells. During vitellogenesis, it is not translocated into the maturing egg. In testes, it is only expressed during some steps of male germline differentiation. At the apex testis, it is expressed at low level in stem cells and dividing spermatogonia, while in newly formed 16-cell cysts of primary spermatocytes, it is transiently but strongly expressed before vanishing during spermatocyte growth phase.

Its subcellular location is the nucleus. Functionally, essential in the female germline for proper survival, sex determination and differentiation. Participates in the transcriptional activation of Otu. Does not regulate the expression of Ovo. In Drosophila melanogaster (Fruit fly), this protein is Protein stand still (stil).